We begin with the raw amino-acid sequence, 473 residues long: Photosystem II CP43 reaction center protein (473 aa).

Residues 1–14 (MKTLYSLRRFYHVE) constitute a propeptide that is removed on maturation. Residue threonine 15 is modified to N-acetylthreonine. A Phosphothreonine modification is found at threonine 15. The next 5 membrane-spanning stretches (helical) occupy residues 69–93 (LFEV…PHLA), 134–155 (LLGP…KDRN), 178–200 (KALY…RKIT), 255–275 (KPFA…LSYS), and 291–312 (WFNN…ASQA). Glutamate 367 contacts [CaMn4O5] cluster. A helical membrane pass occupies residues 447 to 471 (RARAAAAGFEKGIDRDFEPVLSMTP).

This sequence belongs to the PsbB/PsbC family. PsbC subfamily. PSII is composed of 1 copy each of membrane proteins PsbA, PsbB, PsbC, PsbD, PsbE, PsbF, PsbH, PsbI, PsbJ, PsbK, PsbL, PsbM, PsbT, PsbX, PsbY, PsbZ, Psb30/Ycf12, at least 3 peripheral proteins of the oxygen-evolving complex and a large number of cofactors. It forms dimeric complexes. The cofactor is Binds multiple chlorophylls and provides some of the ligands for the Ca-4Mn-5O cluster of the oxygen-evolving complex. It may also provide a ligand for a Cl- that is required for oxygen evolution. PSII binds additional chlorophylls, carotenoids and specific lipids..

It localises to the plastid. The protein localises to the chloroplast thylakoid membrane. In terms of biological role, one of the components of the core complex of photosystem II (PSII). It binds chlorophyll and helps catalyze the primary light-induced photochemical processes of PSII. PSII is a light-driven water:plastoquinone oxidoreductase, using light energy to abstract electrons from H(2)O, generating O(2) and a proton gradient subsequently used for ATP formation. The polypeptide is Photosystem II CP43 reaction center protein (Aethionema cordifolium (Lebanon stonecress)).